A 584-amino-acid chain; its full sequence is Myo-inositol transporter 1 (584 aa).

Topologically, residues 1-81 (MGIHIPYLTS…TSVMITFNQS (81 aa)) are cytoplasmic. At threonine 12 the chain carries Phosphothreonine. Residues 13 to 42 (SQSNVGDAVGNADSVEFNSEHDSPSKRGKI) are disordered. Serine 26, serine 31, serine 35, serine 37, and serine 46 each carry phosphoserine. Positions 30–42 (NSEHDSPSKRGKI) are enriched in basic and acidic residues. A helical transmembrane segment spans residues 82–102 (LSPFIITLTFVASISGFMFGY). Residues 103–129 (DTGYISSALISIGTDLDHKVLTYGEKE) lie on the Extracellular side of the membrane. A helical transmembrane segment spans residues 130–150 (IVTAATSLGALITSIFAGTAA). Topologically, residues 151-163 (DIFGRKRCLMGSN) are cytoplasmic. Residues 164–184 (LMFVIGAILQVSAHTFWQMAV) traverse the membrane as a helical segment. Over 185-186 (GR) the chain is Extracellular. A helical transmembrane segment spans residues 187–207 (LIMGFGVGIGSLIAPLFISEI). Topologically, residues 208–215 (APKMIRGR) are cytoplasmic. The helical transmembrane segment at 216–236 (LTVINSLWLTGGQLVAYGCGA) threads the bilayer. Residues 237–246 (GLNYVNNGWR) lie on the Extracellular side of the membrane. A helical membrane pass occupies residues 247 to 267 (ILVGLSLIPTAVQFTCLCFLP). The Cytoplasmic segment spans residues 268-349 (DTPRYYVMKG…IGCGLQAIQQ (82 aa)). The chain crosses the membrane as a helical span at residues 350 to 370 (FTGWNSLMYFSGTIFETVGFK). N-linked (GlcNAc...) asparagine glycosylation is present at asparagine 371. Topologically, residues 371–376 (NSSAVS) are extracellular. The helical transmembrane segment at 377–397 (IIVSGTNFIFTLVAFFSIDKI) threads the bilayer. Topologically, residues 398-400 (GRR) are cytoplasmic. Residues 401-421 (TILLIGLPGMTMALVVCSIAF) form a helical membrane-spanning segment. Residues 422–441 (HFLGIKFDGAVAVVVSSGFS) are Extracellular-facing. Residues 442-462 (SWGIVIIVFIIVFAAFYALGI) form a helical membrane-spanning segment. Over 463 to 486 (GTVPWQQSELFPQNVRGIGTSYAT) the chain is Cytoplasmic. The helical transmembrane segment at 487 to 507 (ATNWAGSLVIASTFLTMLQNI) threads the bilayer. At 508–510 (TPA) the chain is on the extracellular side. A helical transmembrane segment spans residues 511–531 (GTFAFFAGLSCLSTIFCYFCY). Residues 532–584 (PELSGLELEEVQTILKDGFNIKASKALAKKRKQQVARVHELKYEPTQEIIEDI) are Cytoplasmic-facing. Residue lysine 573 forms a Glycyl lysine isopeptide (Lys-Gly) (interchain with G-Cter in ubiquitin) linkage.

Belongs to the major facilitator superfamily. Sugar transporter (TC 2.A.1.1) family.

The protein resides in the cell membrane. It carries out the reaction myo-inositol(out) + H(+)(out) = myo-inositol(in) + H(+)(in). Major transporter for myo-inositol. The chain is Myo-inositol transporter 1 (ITR1) from Saccharomyces cerevisiae (strain ATCC 204508 / S288c) (Baker's yeast).